Reading from the N-terminus, the 223-residue chain is Glycerol-3-phosphate acyltransferase (223 aa).

Helical transmembrane passes span 2–22, 52–72, 78–98, 112–132, and 153–173; these read LEIL…GLVI, WGVA…WLAF, PVFV…SCFM, IFLP…MLVI, and LAVS…AVVV. The tract at residues 191 to 223 is disordered; the sequence is WLKSKNKGAAAGNAAEGDDTQNMNPQDAGRKDG.

The protein belongs to the PlsY family. Probably interacts with PlsX.

The protein localises to the cell inner membrane. The enzyme catalyses an acyl phosphate + sn-glycerol 3-phosphate = a 1-acyl-sn-glycero-3-phosphate + phosphate. It participates in lipid metabolism; phospholipid metabolism. In terms of biological role, catalyzes the transfer of an acyl group from acyl-phosphate (acyl-PO(4)) to glycerol-3-phosphate (G3P) to form lysophosphatidic acid (LPA). This enzyme utilizes acyl-phosphate as fatty acyl donor, but not acyl-CoA or acyl-ACP. The protein is Glycerol-3-phosphate acyltransferase of Desulfovibrio desulfuricans (strain ATCC 27774 / DSM 6949 / MB).